Here is a 493-residue protein sequence, read N- to C-terminus: Solute carrier family 2, facilitated glucose transporter member 3 (493 aa).

At 1–10 (MGTAKVTPSL) the chain is on the cytoplasmic side. A helical membrane pass occupies residues 11–32 (VFAVTVATIGSFQFGYNTGVIN). Residues 33-64 (APETIIKDFLNYTLEERLEDLPREGLLTTLWS) lie on the Extracellular side of the membrane. N-linked (GlcNAc...) asparagine glycosylation is present at asparagine 43. Residues 65–85 (LCVAIFSVGGMIGSFSVGLFV) form a helical membrane-spanning segment. Residues 86 to 90 (NRFGR) are Cytoplasmic-facing. Residues 91-111 (RNSMLLVNLIAILGGCLMGFA) traverse the membrane as a helical segment. Over 112–118 (KIAESVE) the chain is Extracellular. Residues 119–142 (MLILGRLIIGIFCGLCTGFVPMYI) form a helical membrane-spanning segment. Residues 143–153 (GEVSPTALRGA) are Cytoplasmic-facing. The helical transmembrane segment at 154–174 (FGTLNQLGIVVGILVAQVFGL) threads the bilayer. Glutamine 159 contributes to the D-glucose binding site. Topologically, residues 175–183 (DFILGSEEL) are extracellular. Residues 184–204 (WPGLLGLTIIPAILQSAALPF) traverse the membrane as a helical segment. Residues 205–269 (CPESPRFLLI…LFKSPSYFQP (65 aa)) are Cytoplasmic-facing. Threonine 232 carries the phosphothreonine modification. A helical membrane pass occupies residues 270–290 (LLISVVLQLSQQFSGINAVFY). The important for selectivity against fructose stretch occupies residues 277–279 (QLS). Residues 280 to 281 (QQ) and asparagine 286 each bind D-glucose. Over 291 to 304 (YSTGIFQDAGVQEP) the chain is Extracellular. Residues 305–325 (IYATIGAGVVNTIFTVVSLFL) traverse the membrane as a helical segment. Asparagine 315 is a binding site for D-glucose. Over 326–331 (VERAGR) the chain is Cytoplasmic. A helical membrane pass occupies residues 332–352 (RTLHMIGLGGMAVCSVFMTIS). The Extracellular segment spans residues 353–363 (LLLKDEYEAMS). The chain crosses the membrane as a helical span at residues 364 to 389 (FVCIVAILVYVAFFEIGPGPIPWFIV). Glutamate 378 and tryptophan 386 together coordinate D-glucose. Topologically, residues 390-399 (AELFSQGPRP) are cytoplasmic. The chain crosses the membrane as a helical span at residues 400 to 420 (AAMAVAGCSNWTSNFLVGMFF). Over 421 to 429 (PSAAAYLGA) the chain is Extracellular. The helical transmembrane segment at 430–450 (YVFIIFAAFLVFFLIFTSFKV) threads the bilayer. At 451-493 (PETKGRTFEDITRAFEGQAHSGKGSAGVELNSMQPVKETPGNA) the chain is on the cytoplasmic side. Serine 471, serine 475, and serine 482 each carry phosphoserine. Position 489 is a phosphothreonine (threonine 489).

Belongs to the major facilitator superfamily. Sugar transporter (TC 2.A.1.1) family. Glucose transporter subfamily. In terms of assembly, interacts with SMIM43; the interaction may promote SLC2A3-mediated glucose transport to meet the energy needs of mesendoderm differentiation. Brain and osteoblastic cells (at protein level). Highly expressed in brain.

It localises to the cell membrane. The protein resides in the perikaryon. It is found in the cell projection. The catalysed reaction is D-glucose(out) = D-glucose(in). It catalyses the reaction D-galactose(in) = D-galactose(out). Its activity is regulated as follows. Deoxyglucose transport is inhibited by D-glucose, D-galactose and maltose. Galactose transport is inhibited by D-glucose and maltose. In terms of biological role, facilitative glucose transporter. Can also mediate the uptake of various other monosaccharides across the cell membrane. Mediates the uptake of glucose, 2-deoxyglucose, galactose, mannose, xylose and fucose, and probably also dehydroascorbate. Does not mediate fructose transport. Required for mesendoderm differentiation. This chain is Solute carrier family 2, facilitated glucose transporter member 3, found in Rattus norvegicus (Rat).